The primary structure comprises 210 residues: Putative 4-hydroxy-4-methyl-2-oxoglutarate aldolase (210 aa).

Substrate is bound by residues 87 to 90 (GDFV) and Arg109. Asp110 contacts a divalent metal cation.

The protein belongs to the class II aldolase/RraA-like family. As to quaternary structure, homotrimer. A divalent metal cation is required as a cofactor.

It catalyses the reaction 4-hydroxy-4-methyl-2-oxoglutarate = 2 pyruvate. The catalysed reaction is oxaloacetate + H(+) = pyruvate + CO2. Catalyzes the aldol cleavage of 4-hydroxy-4-methyl-2-oxoglutarate (HMG) into 2 molecules of pyruvate. Also contains a secondary oxaloacetate (OAA) decarboxylase activity due to the common pyruvate enolate transition state formed following C-C bond cleavage in the retro-aldol and decarboxylation reactions. In Halalkalibacterium halodurans (strain ATCC BAA-125 / DSM 18197 / FERM 7344 / JCM 9153 / C-125) (Bacillus halodurans), this protein is Putative 4-hydroxy-4-methyl-2-oxoglutarate aldolase.